The sequence spans 209 residues: D-aminoacyl-tRNA deacylase 1 (209 aa).

The Mg(2+) site is built by V4, Q6, and C28. A Gly-cisPro motif, important for rejection of L-amino acids motif is present at residues 139–140 (GP). The disordered stretch occupies residues 142-209 (TIELESPAPG…EGDVSSEREP (68 aa)). 2 stretches are compositionally biased toward basic and acidic residues: residues 159 to 170 (QLSKLEKQQQRK) and 181 to 194 (SSKE…EDRS). Residues S197, S204, and S205 each carry the phosphoserine modification.

Belongs to the DTD family. In terms of assembly, homodimer. Interacts with CDC45 and TOPBP1. Preferentially phosphorylated in cells arrested early in S phase. Phosphorylation in the C-terminus weakens the interaction with CDC45.

The protein localises to the nucleus. The protein resides in the cytoplasm. It carries out the reaction glycyl-tRNA(Ala) + H2O = tRNA(Ala) + glycine + H(+). The catalysed reaction is a D-aminoacyl-tRNA + H2O = a tRNA + a D-alpha-amino acid + H(+). Functionally, an aminoacyl-tRNA editing enzyme that deacylates mischarged D-aminoacyl-tRNAs. Also deacylates mischarged glycyl-tRNA(Ala), protecting cells against glycine mischarging by AlaRS. Acts via tRNA-based rather than protein-based catalysis; rejects L-amino acids rather than detecting D-amino acids in the active site. By recycling D-aminoacyl-tRNA to D-amino acids and free tRNA molecules, this enzyme counteracts the toxicity associated with the formation of D-aminoacyl-tRNA entities in vivo and helps enforce protein L-homochirality. In terms of biological role, ATPase involved in DNA replication, may facilitate loading of CDC45 onto pre-replication complexes. The protein is D-aminoacyl-tRNA deacylase 1 (DTD1) of Bos taurus (Bovine).